Reading from the N-terminus, the 179-residue chain is Large ribosomal subunit protein uL6 (179 aa).

This sequence belongs to the universal ribosomal protein uL6 family. Part of the 50S ribosomal subunit.

Functionally, this protein binds to the 23S rRNA, and is important in its secondary structure. It is located near the subunit interface in the base of the L7/L12 stalk, and near the tRNA binding site of the peptidyltransferase center. This chain is Large ribosomal subunit protein uL6, found in Mycoplasmopsis pulmonis (strain UAB CTIP) (Mycoplasma pulmonis).